Consider the following 513-residue polypeptide: ATP synthase subunit alpha (513 aa).

169–176 (GDRQCGKT) contacts ATP.

It belongs to the ATPase alpha/beta chains family. F-type ATPases have 2 components, CF(1) - the catalytic core - and CF(0) - the membrane proton channel. CF(1) has five subunits: alpha(3), beta(3), gamma(1), delta(1), epsilon(1). CF(0) has three main subunits: a(1), b(2) and c(9-12). The alpha and beta chains form an alternating ring which encloses part of the gamma chain. CF(1) is attached to CF(0) by a central stalk formed by the gamma and epsilon chains, while a peripheral stalk is formed by the delta and b chains.

The protein resides in the cell inner membrane. The catalysed reaction is ATP + H2O + 4 H(+)(in) = ADP + phosphate + 5 H(+)(out). Its function is as follows. Produces ATP from ADP in the presence of a proton gradient across the membrane. The alpha chain is a regulatory subunit. The protein is ATP synthase subunit alpha of Burkholderia vietnamiensis (strain G4 / LMG 22486) (Burkholderia cepacia (strain R1808)).